The following is a 252-amino-acid chain: Imidazole glycerol phosphate synthase subunit HisF (252 aa).

Catalysis depends on residues Asp-13 and Asp-132.

The protein belongs to the HisA/HisF family. In terms of assembly, heterodimer of HisH and HisF.

The protein localises to the cytoplasm. It carries out the reaction 5-[(5-phospho-1-deoxy-D-ribulos-1-ylimino)methylamino]-1-(5-phospho-beta-D-ribosyl)imidazole-4-carboxamide + L-glutamine = D-erythro-1-(imidazol-4-yl)glycerol 3-phosphate + 5-amino-1-(5-phospho-beta-D-ribosyl)imidazole-4-carboxamide + L-glutamate + H(+). The protein operates within amino-acid biosynthesis; L-histidine biosynthesis; L-histidine from 5-phospho-alpha-D-ribose 1-diphosphate: step 5/9. Functionally, IGPS catalyzes the conversion of PRFAR and glutamine to IGP, AICAR and glutamate. The HisF subunit catalyzes the cyclization activity that produces IGP and AICAR from PRFAR using the ammonia provided by the HisH subunit. The chain is Imidazole glycerol phosphate synthase subunit HisF from Campylobacter hominis (strain ATCC BAA-381 / DSM 21671 / CCUG 45161 / LMG 19568 / NCTC 13146 / CH001A).